The chain runs to 152 residues: Aspartate 1-decarboxylase (152 aa).

S24 (schiff-base intermediate with substrate; via pyruvic acid) is an active-site residue. S24 carries the post-translational modification Pyruvic acid (Ser). A substrate-binding site is contributed by T56. Y57 serves as the catalytic Proton donor. Position 72 to 74 (72 to 74 (GAA)) interacts with substrate.

Belongs to the PanD family. Heterooctamer of four alpha and four beta subunits. Requires pyruvate as cofactor. Is synthesized initially as an inactive proenzyme, which is activated by self-cleavage at a specific serine bond to produce a beta-subunit with a hydroxyl group at its C-terminus and an alpha-subunit with a pyruvoyl group at its N-terminus.

Its subcellular location is the cytoplasm. The enzyme catalyses L-aspartate + H(+) = beta-alanine + CO2. The protein operates within cofactor biosynthesis; (R)-pantothenate biosynthesis; beta-alanine from L-aspartate: step 1/1. Catalyzes the pyruvoyl-dependent decarboxylation of aspartate to produce beta-alanine. This is Aspartate 1-decarboxylase from Rhodospirillum centenum (strain ATCC 51521 / SW).